The sequence spans 350 residues: MVRSPVSDKFCIPDTLASWPYPRILNPHYAEEKAASAAWTKGFGAFGPKAQDAFDRCDFNLLACLAYPIATPERCRSGCDLMNLFFVIDEHSDTHGEETVRKMKDVVMDAIRNPHKPRPNDEWIGGEIARQFWERAMCYASEISQRRFIDTFDEYLESVVDQAADRDSARIRDIESYINIRRNTIGAKPSFVIMEQGMDIPDNVFENEVFQRLRMATIDMLCLGNDIVSYNIEQARGDDSHNIVRIVMNELDTDVPRAMDWVAQRHTQLEREFFTALSELPTWGEPIDGWVKEYVYGLGNWVRANDQWSFESQRYFGTKGMEIMKSRWLSVLPKVRPAEVGPQLVDQSLL.

Mg(2+) is bound by residues D89, N225, S229, and E233. Residues 89–93 (DEHSD) carry the D(D/E)XX(D/E) motif motif. An NSE motif motif is present at residues 225-233 (NDIVSYNIE). (2E,6E)-farnesyl diphosphate-binding residues include R314 and Y315.

This sequence belongs to the terpene synthase family. It depends on Mg(2+) as a cofactor. Requires Mn(2+) as cofactor. The cofactor is Ca(2+). Ni(2+) is required as a cofactor. Co(2+) serves as cofactor.

It carries out the reaction (2E,6E)-farnesyl diphosphate = Delta(6)-protoilludene + diphosphate. It catalyses the reaction (2E,6E)-farnesyl diphosphate = alpha-selinene + diphosphate. Ca(2+) switches the cyclization mechanism of delta(6)-protoilludene synthase from 1,11 to 1,10 cyclization which leads to the production of beta-elemene. Its function is as follows. Terpene cyclase that catalyzes the cyclization of farnesyl diphosphate (FPP) to delta(6)-protoilludene. In presence of Ca(2+), a significant switch from 1,11 to a dual 1,11/1,10 cyclization occurs, producing beta-elemene as the major product, with lower levels of delta(6)-protoilludene and (E)-beta-caryophyllene, and traces of beta-selinene and alpha-selinene. In Stereum hirsutum (strain FP-91666) (White-rot fungus), this protein is Delta(6)-protoilludene synthase STEHIDRAFT_64702.